The chain runs to 1362 residues: Integrator complex subunit 2 homolog (1362 aa).

A compositionally biased stretch (low complexity) spans 1 to 10 (MITSNNNNKN). 3 disordered regions span residues 1-20 (MITS…EMKS), 629-660 (TTGT…SSPN), and 928-963 (NNNK…EEEE). Positions 945–955 (DDVKMKDKEKE) are enriched in basic and acidic residues.

Belongs to the Integrator subunit 2 family. As to quaternary structure, component of the Integrator complex. The core complex associates with protein phosphatase 2A subunits, to form the Integrator-PP2A (INTAC) complex.

It is found in the nucleus. The protein resides in the cytoplasm. Functionally, component of the integrator complex, a multiprotein complex that terminates RNA polymerase II (Pol II) transcription in the promoter-proximal region of genes. The integrator complex provides a quality checkpoint during transcription elongation by driving premature transcription termination of transcripts that are unfavorably configured for transcriptional elongation: the complex terminates transcription by (1) catalyzing dephosphorylation of the C-terminal domain (CTD) of Pol II subunit polr2a, (2) degrading the exiting nascent RNA transcript via endonuclease activity and (3) promoting the release of Pol II from bound DNA. The integrator complex is also involved in terminating the synthesis of non-coding Pol II transcripts, such as enhancer RNAs (eRNAs), small nuclear RNAs (snRNAs), telomerase RNAs and long non-coding RNAs (lncRNAs). The sequence is that of Integrator complex subunit 2 homolog (ints2) from Dictyostelium discoideum (Social amoeba).